Consider the following 610-residue polypeptide: MSEIFDAKAFLKTVTSQPGVYRMYDAGGTVIYVGKAKDLKKRLSSYFRSNLASRKTEALVAQIQHIDVTVTHTETEALLLEHNYIKLYQPRYNVLLRDDKSYPFIFLSGDTHPRLAMHRGAKHAKGEYFGPFPNGYAVRETLALLQKIFPIRQCENSVYRNRSRPCLQYQIGRCLGPCVAGLVSEEEYAQQVEYVRLFLSGKDDQVLTQLIARMEKASQDLAFEEAARIRDQIQAVRRVTEKQFVSNAGDDLDVIGVAFDAGMACVHVLFIRQGKVLGSRSYFPKVPGGTELGEVVETFVGQFYLQGSQMRTLPGEILLDFNLSDKTLLADSLSELAGRRIHVQTKPRGDRARYLKLARTNAATALITKLSQQSTITQRLSALAAVLKLPAIKRMECFDISHTMGEQTVASCVVFDANGPLRAEYRRYNIAGITPGDDYAAMNQVLRRRYGKAIEESKIPDVILIDGGKGQLAQAKAVFAELDVPWDKHRPLLLGVAKGADRKAGLETLFFEPEGEGFSLPPDSPALHVIQHIRDESHDHAIGGHRKKRAKVKNTSTLETIEGVGPKRRQMLLKYMGGLQGLRNASVEEIAKVPGISQGLAEKIFWSLKH.

In terms of domain architecture, GIY-YIG spans 16–94; the sequence is SQPGVYRMYD…IKLYQPRYNV (79 aa). The region spanning 204–239 is the UVR domain; it reads DQVLTQLIARMEKASQDLAFEEAARIRDQIQAVRRV.

It belongs to the UvrC family. Interacts with UvrB in an incision complex.

It is found in the cytoplasm. Functionally, the UvrABC repair system catalyzes the recognition and processing of DNA lesions. UvrC both incises the 5' and 3' sides of the lesion. The N-terminal half is responsible for the 3' incision and the C-terminal half is responsible for the 5' incision. This chain is UvrABC system protein C, found in Salmonella typhimurium (strain LT2 / SGSC1412 / ATCC 700720).